We begin with the raw amino-acid sequence, 304 residues long: Coenzyme PQQ synthesis protein B (304 aa).

The protein belongs to the PqqB family.

The protein operates within cofactor biosynthesis; pyrroloquinoline quinone biosynthesis. Functionally, may be involved in the transport of PQQ or its precursor to the periplasm. The chain is Coenzyme PQQ synthesis protein B from Pseudomonas paraeruginosa (strain DSM 24068 / PA7) (Pseudomonas aeruginosa (strain PA7)).